We begin with the raw amino-acid sequence, 208 residues long: MGMYSAIPLALPMVLLMVYGLTPSLGHSPRTPDRVSEADIQRLLHGVMEELGIARPRVEYPAHQAMNLVGPQSIEGGAHEGLQHLGPYGNIPNIVAELTGDNIPKDFREDQGYPNPPNPCPVGKTGDGCLEDTPDTAQFSREYQLHQNLYDPEHNYPGASTWNKKLLYEKIKGASQRQKRTVNPYLQGQKLDKVVAKKSVPHFSGEEE.

The signal sequence occupies residues 1–26; it reads MGMYSAIPLALPMVLLMVYGLTPSLG. C120 and C129 are oxidised to a cystine. S204 is subject to Phosphoserine.

This sequence belongs to the 7B2 family. Interacts with pcsk2 early in the secretory pathway. Dissociation occurs at later stages. Post-translationally, proteolytically cleaved in the Golgi by a furin-like convertase to generate bioactive peptides. Sulfated on tyrosine residues.

Its subcellular location is the secreted. Functionally, acts as a molecular chaperone for pcsk2, preventing its premature activation in the regulated secretory pathway. Binds to inactive pcsk2 in the endoplasmic reticulum and facilitates its transport from there to later compartments of the secretory pathway where it is proteolytically matured and activated. Also required for cleavage of pcsk2 but does not appear to be involved in its folding. The protein is Neuroendocrine protein 7B2 (scg5.L) of Xenopus laevis (African clawed frog).